Consider the following 1038-residue polypeptide: Activated CDC42 kinase 1 (1038 aa).

An SAM-like domain region spans residues 1–110 (MQPEEGTGWL…TSPAPGGPAG (110 aa)). Residues 90–114 (PPHHSQSTFRKTSPAPGGPAGEGPL) form a disordered region. The 260-residue stretch at 126-385 (LRLLEKLGDG…PTFVALRDFL (260 aa)) folds into the Protein kinase domain. Residues 132–140 (LGDGSFGVV) and Lys158 each bind ATP. Catalysis depends on Asp252, which acts as the Proton acceptor. The residue at position 284 (Tyr284) is a Phosphotyrosine; by SRC and autocatalysis. The SH3 domain maps to 388 to 448 (AQPTDMRALQ…PRNVVTSVAG (61 aa)). The region spanning 454 to 466 (ISQPLQNSFIHTG) is the CRIB domain. The tract at residues 497 to 535 (LSVELSTSRPPQHLGGVKKPTYDPVSEDQDPLSSDFKRL) is disordered. Tyr518 is subject to Phosphotyrosine. The interval 623 to 652 (DWDARPLPPPPAYDDVAQDEDDFEICSINS) is required for interaction with SRC. Residues 632-635 (PPAY) are required for interaction with NEDD4. 2 disordered regions span residues 659–702 (VPAG…SSAQ) and 718–840 (LQAP…GPRA). At Ser724 the chain carries Phosphoserine. Residues 733-876 (GDDKPQVPPR…SYLERYQRFL (144 aa)) are EBD domain. Composition is skewed to pro residues over residues 738–749 (QVPPRVPIPPRP), 772–783 (PASPPRVPPREP), and 794–805 (PLVPPGSSPLPP). The residue at position 827 (Tyr827) is a Phosphotyrosine. Position 839 is an omega-N-methylarginine (Arg839). Phosphotyrosine occurs at positions 859 and 872. Ser881 is subject to Phosphoserine. The disordered stretch occupies residues 917–957 (LDPKANFSTNNSNPGARPPPPRATARLPQRGCPGDGPEAGR). A UBA domain is found at 958–996 (PADKIQMAMVHGVTTEECQAALQCHGWSVQRAAQYLKVE).

It belongs to the protein kinase superfamily. Tyr protein kinase family. Interacts with NEDD4 (via WW3 domain). NEDD4L and EGF promote association with NEDD4. Homodimer. Interacts with AR, CDC42, WWASL and WWOX. Interacts with CSPG4 (activated). Interacts with MERTK (activated); stimulates autophosphorylation. May interact (phosphorylated) with HSP90AB1; maintains kinase activity. Interacts with NPHP1. Interacts with SNX9 (via SH3 domain). Interacts with SRC (via SH2 and SH3 domain). Interacts with EGFR, and this interaction is dependent on EGF stimulation and kinase activity of EGFR. Interacts (via kinase domain) with AKT1. Part of a collagen stimulated complex involved in cell migration composed of CDC42, CRK, TNK2 and BCAR1/p130cas. Interacts with BCAR1/p130cas via SH3 domains. Forms complexes with GRB2 and numerous receptor tyrosine kinases (RTK) including LTK, AXL or PDGFRL, in which GRB2 promotes RTK recruitment by TNK2. Mg(2+) serves as cofactor. In terms of processing, autophosphorylation regulates kinase activity. Phosphorylation on Tyr-518 is required for interaction with SRC and is observed during association with clathrin-coated pits. Polyubiquitinated by NEDD4 and NEDD4L. Degradation can be induced by EGF and is lysosome-dependent. As to expression, the Tyr-284 phosphorylated form shows a significant increase in expression in breast cancers during the progressive stages i.e. normal to hyperplasia (ADH), ductal carcinoma in situ (DCIS), invasive ductal carcinoma (IDC) and lymph node metastatic (LNMM) stages. It also shows a significant increase in expression in prostate cancers during the progressive stages.

The protein resides in the cell membrane. Its subcellular location is the nucleus. It localises to the endosome. It is found in the cell junction. The protein localises to the adherens junction. The protein resides in the cytoplasmic vesicle membrane. Its subcellular location is the cytoplasmic vesicle. It localises to the clathrin-coated vesicle. It is found in the membrane. The protein localises to the clathrin-coated pit. The protein resides in the cytoplasm. Its subcellular location is the perinuclear region. It localises to the cytosol. It catalyses the reaction L-tyrosyl-[protein] + ATP = O-phospho-L-tyrosyl-[protein] + ADP + H(+). The catalysed reaction is L-seryl-[protein] + ATP = O-phospho-L-seryl-[protein] + ADP + H(+). The enzyme catalyses L-threonyl-[protein] + ATP = O-phospho-L-threonyl-[protein] + ADP + H(+). Inhibited by AIM-100 (4-amino-5,6-biaryl-furo[2,3-d]pyrimidine), which suppresses activating phosphorylation at Tyr-284. Repressed by dasatinib. Its function is as follows. Non-receptor tyrosine-protein and serine/threonine-protein kinase that is implicated in cell spreading and migration, cell survival, cell growth and proliferation. Transduces extracellular signals to cytosolic and nuclear effectors. Phosphorylates AKT1, AR, MCF2, WASL and WWOX. Implicated in trafficking and clathrin-mediated endocytosis through binding to epidermal growth factor receptor (EGFR) and clathrin. Binds to both poly- and mono-ubiquitin and regulates ligand-induced degradation of EGFR, thereby contributing to the accumulation of EGFR at the limiting membrane of early endosomes. Downstream effector of CDC42 which mediates CDC42-dependent cell migration via phosphorylation of BCAR1. May be involved both in adult synaptic function and plasticity and in brain development. Activates AKT1 by phosphorylating it on 'Tyr-176'. Phosphorylates AR on 'Tyr-267' and 'Tyr-363' thereby promoting its recruitment to androgen-responsive enhancers (AREs). Phosphorylates WWOX on 'Tyr-287'. Phosphorylates MCF2, thereby enhancing its activity as a guanine nucleotide exchange factor (GEF) toward Rho family proteins. Contributes to the control of AXL receptor levels. Confers metastatic properties on cancer cells and promotes tumor growth by negatively regulating tumor suppressor such as WWOX and positively regulating pro-survival factors such as AKT1 and AR. Phosphorylates WASP. The protein is Activated CDC42 kinase 1 (TNK2) of Homo sapiens (Human).